The following is a 153-amino-acid chain: Nuclear cap-binding protein subunit 2 (153 aa).

MRNA contacts are provided by residues Y17, Y40, R109–D113, R120–R124, and Q130–V131. Residues C37–G115 form the RRM domain.

It belongs to the RRM NCBP2 family. In terms of assembly, component of the nuclear cap-binding complex (CBC), a heterodimer composed of ncbp1/cbp80 and ncbp2/cbp20 that interacts with m7GpppG-capped RNA.

The protein localises to the nucleus. It is found in the cytoplasm. In terms of biological role, component of the cap-binding complex (CBC), which binds co-transcriptionally to the 5' cap of pre-mRNAs and is involved in various processes such as pre-mRNA splicing, translation regulation, nonsense-mediated mRNA decay, RNA-mediated gene silencing (RNAi) by microRNAs (miRNAs) and mRNA export. The CBC complex is involved in mRNA export from the nucleus, leading to the recruitment of the mRNA export machinery to the 5' end of mRNA and to mRNA export in a 5' to 3' direction through the nuclear pore. The CBC complex is also involved in mediating U snRNA and intronless mRNAs export from the nucleus. The CBC complex is essential for a pioneer round of mRNA translation, before steady state translation when the CBC complex is replaced by cytoplasmic cap-binding protein eIF4E. The pioneer round of mRNA translation mediated by the CBC complex plays a central role in nonsense-mediated mRNA decay (NMD), NMD only taking place in mRNAs bound to the CBC complex, but not on eIF4E-bound mRNAs. The CBC complex enhances NMD in mRNAs containing at least one exon-junction complex (EJC), promoting the interaction between upf1 and upf2. The CBC complex is also involved in 'failsafe' NMD, which is independent of the EJC complex, while it does not participate in Staufen-mediated mRNA decay (SMD). During cell proliferation, the CBC complex is also involved in microRNAs (miRNAs) biogenesis via its interaction with srrt/ars2, thereby being required for miRNA-mediated RNA interference. The CBC complex also acts as a negative regulator of parn, thereby acting as an inhibitor of mRNA deadenylation. In the CBC complex, ncbp2/cbp20 recognizes and binds capped RNAs (m7GpppG-capped RNA) but requires ncbp1/cbp80 to stabilize the movement of its N-terminal loop and lock the CBC into a high affinity cap-binding state with the cap structure. The conventional cap-binding complex with NCBP2 binds both small nuclear RNA (snRNA) and messenger (mRNA) and is involved in their export from the nucleus. The sequence is that of Nuclear cap-binding protein subunit 2 (ncbp2) from Xenopus laevis (African clawed frog).